Reading from the N-terminus, the 467-residue chain is Dihydrolipoyl dehydrogenase 3 (467 aa).

FAD contacts are provided by residues 34–43, Lys52, and Ala116; that span reads EGRETLGGTC. A disulfide bridge links Cys43 with Cys48. NAD(+) contacts are provided by residues 182–186, Glu205, Val239, and 272–275; these read GAGVI and AIGR. FAD contacts are provided by Asp314 and Ala322. Catalysis depends on His446, which acts as the Proton acceptor.

This sequence belongs to the class-I pyridine nucleotide-disulfide oxidoreductase family. In terms of assembly, homodimer. It depends on FAD as a cofactor.

The protein localises to the cytoplasm. It catalyses the reaction N(6)-[(R)-dihydrolipoyl]-L-lysyl-[protein] + NAD(+) = N(6)-[(R)-lipoyl]-L-lysyl-[protein] + NADH + H(+). LPD-3 may substitute for lipoamide dehydrogenase of the 2-oxoglutarate dehydrogenase and pyruvate multienzyme complexes when the latter is inactive or missing. The chain is Dihydrolipoyl dehydrogenase 3 (lpd3) from Pseudomonas aeruginosa (strain ATCC 15692 / DSM 22644 / CIP 104116 / JCM 14847 / LMG 12228 / 1C / PRS 101 / PAO1).